Here is a 428-residue protein sequence, read N- to C-terminus: E3 ubiquitin-protein ligase RNF128 (428 aa).

The N-terminal stretch at 1–38 is a signal peptide; sequence MGPPPGAGVSCRGGCGFSRLLAWCFLLALSPQAPGSRG. N-linked (GlcNAc...) asparagine glycans are attached at residues Asn48, Asn59, and Asn101. The 109-residue stretch at 75–183 folds into the PA domain; that stretch reads SPLEPVAGVL…LKGTKILQSI (109 aa). The chain crosses the membrane as a helical span at residues 208-228; sequence IFFVSVSFFIITAATVGYFIF. An RING-type; atypical zinc finger spans residues 277–318; it reads CAVCIELYKPNDLVRILTCNHIFHKTCVDPWLLEHRTCPMCK. The segment at 346-428 is disordered; sequence ISNSASSHEE…QETAVREIKS (83 aa). Positions 360-371 are enriched in polar residues; the sequence is ETASSGYASVQG.

Post-translationally, auto-ubiquitinated. Controls the development of T-cell clonal anergy by ubiquitination.

It is found in the cytoplasm. It localises to the endomembrane system. The protein resides in the cytoskeleton. Its subcellular location is the perinuclear region. It carries out the reaction S-ubiquitinyl-[E2 ubiquitin-conjugating enzyme]-L-cysteine + [acceptor protein]-L-lysine = [E2 ubiquitin-conjugating enzyme]-L-cysteine + N(6)-ubiquitinyl-[acceptor protein]-L-lysine.. It participates in protein modification; protein ubiquitination. E3 ubiquitin-protein ligase that catalyzes 'Lys-27', 'Lys-48'- or 'Lys-63'-linked polyubiquitin chains formation and plays a role in different biological processes such as modulation of immune response, cytoskeletal dynamics or protein homeostasis. Inhibits IL2 and IL4 transcription, thereby playing an important role in the induction of the anergic phenotype, a long-term stable state of T-lymphocyte unresponsiveness to antigenic stimulation associated with the blockade of interleukin production. Ubiquitinates ARPC5 with 'Lys-48' linkages and COR1A with 'Lys-63' linkages leading to their degradation, down-regulation of these cytoskeletal components results in impaired lamellipodium formation and reduced accumulation of F-actin at the immunological synapse. Functions in the patterning of the dorsal ectoderm; sensitizes ectoderm to respond to neural-inducing signals. Plays a positive role in innate immune response by promoting 'Lys-63'-linked ubiquitination of TBK1 after RNA- or DNA-virus infection. Regulates alveolar macrophage activation and neutrophil infiltration by interacting with TLR4, targeting it for degradation, and inhibiting NF-kappa-B activation, hence decreasing pro-inflammatory cytokines. Negatively regulates the IL-3/STAT5 signaling pathway by facilitating 'Lys-27'-linked polyubiquitination of IL3RA leading to its degradation via lysosomal pathway. Directly regulates the N-glycosylation process in the endoplasmic reticulum by targeting the glycosyl-transferase RPN1 for ubiquitination and degradation. Other substrates targeted for degradation by RNF128 include transmembrane proteins CD40L, CD83 or the tetraspanin CD151. The chain is E3 ubiquitin-protein ligase RNF128 (RNF128) from Homo sapiens (Human).